Here is a 209-residue protein sequence, read N- to C-terminus: Uracil phosphoribosyltransferase (209 aa).

5-phospho-alpha-D-ribose 1-diphosphate contacts are provided by residues Arg-79, Arg-104, and 131-139 (DPMLATGVS). Residues Ile-194 and 199 to 201 (GDA) contribute to the uracil site. Asp-200 contacts 5-phospho-alpha-D-ribose 1-diphosphate.

Belongs to the UPRTase family. Mg(2+) serves as cofactor.

It catalyses the reaction UMP + diphosphate = 5-phospho-alpha-D-ribose 1-diphosphate + uracil. It functions in the pathway pyrimidine metabolism; UMP biosynthesis via salvage pathway; UMP from uracil: step 1/1. Its activity is regulated as follows. Allosterically activated by GTP. Its function is as follows. Catalyzes the conversion of uracil and 5-phospho-alpha-D-ribose 1-diphosphate (PRPP) to UMP and diphosphate. In Thermotoga maritima (strain ATCC 43589 / DSM 3109 / JCM 10099 / NBRC 100826 / MSB8), this protein is Uracil phosphoribosyltransferase.